A 218-amino-acid polypeptide reads, in one-letter code: Large ribosomal subunit protein uL3 (218 aa).

The residue at position 154 (Gln154) is an N5-methylglutamine.

This sequence belongs to the universal ribosomal protein uL3 family. In terms of assembly, part of the 50S ribosomal subunit. Forms a cluster with proteins L14 and L19. In terms of processing, methylated by PrmB.

One of the primary rRNA binding proteins, it binds directly near the 3'-end of the 23S rRNA, where it nucleates assembly of the 50S subunit. The polypeptide is Large ribosomal subunit protein uL3 (Polynucleobacter asymbioticus (strain DSM 18221 / CIP 109841 / QLW-P1DMWA-1) (Polynucleobacter necessarius subsp. asymbioticus)).